Reading from the N-terminus, the 147-residue chain is Acidic phospholipase A2 beta-bungarotoxin A3 chain (147 aa).

The signal sequence occupies residues 1–19 (MYPAHLLVLSAVCVSLLGA). A propeptide spanning residues 20–27 (ANIPPHPL) is cleaved from the precursor. 6 disulfides stabilise this stretch: Cys54/Cys146, Cys56/Cys72, Cys71/Cys127, Cys78/Cys120, Cys88/Cys113, and Cys106/Cys118. Ca(2+) is bound by residues Tyr55, Gly57, and Gly59. His75 is a catalytic residue. Asp76 is a Ca(2+) binding site. Residue Asp121 is part of the active site.

The protein belongs to the phospholipase A2 family. Group I subfamily. D49 sub-subfamily. Heterodimer; disulfide-linked. The A chains have phospholipase A2 activity and the B chains show homology with the basic protease inhibitors. The A3 chain is found in beta-5 bungarotoxins. It depends on Ca(2+) as a cofactor. In terms of tissue distribution, expressed by the venom gland.

The protein resides in the secreted. It carries out the reaction a 1,2-diacyl-sn-glycero-3-phosphocholine + H2O = a 1-acyl-sn-glycero-3-phosphocholine + a fatty acid + H(+). Its function is as follows. Snake venom phospholipase A2 (PLA2) that inhibits neuromuscular transmission by blocking acetylcholine release from the nerve termini. PLA2 catalyzes the calcium-dependent hydrolysis of the 2-acyl groups in 3-sn-phosphoglycerides. The protein is Acidic phospholipase A2 beta-bungarotoxin A3 chain of Bungarus multicinctus (Many-banded krait).